The sequence spans 121 residues: MASIPSTGSLIATHDYYRRRIGSTSSNSSCGSSEYAGEVIPHPPGLQRQDSGHWWSSFFFPNKQNQPGGMIGSEQKSGTYTVTNGQVACIAREMVLKKQLSRQLSESSDSGKVEQGSPPPS.

Disordered stretches follow at residues 22–47 and 101–121; these read GSTSSNSSCGSSEYAGEVIPHPPGLQ and SRQLSESSDSGKVEQGSPPPS. The span at 23–33 shows a compositional bias: low complexity; sequence STSSNSSCGSS. Over residues 101 to 110 the composition is skewed to polar residues; that stretch reads SRQLSESSDS.

The protein belongs to the PPDPF family.

In terms of biological role, probable regulator of exocrine pancreas development. This Salmo salar (Atlantic salmon) protein is Pancreatic progenitor cell differentiation and proliferation factor (ppdpf).